The chain runs to 194 residues: dITP/XTP pyrophosphatase (194 aa).

Residue 8-13 (TNNPHK) coordinates substrate. D69 serves as the catalytic Proton acceptor. Residue D69 participates in Mg(2+) binding. Substrate-binding positions include T70, 150-153 (FGYD), K173, and 178-179 (HR).

Belongs to the HAM1 NTPase family. As to quaternary structure, homodimer. The cofactor is Mg(2+).

It carries out the reaction XTP + H2O = XMP + diphosphate + H(+). The enzyme catalyses dITP + H2O = dIMP + diphosphate + H(+). The catalysed reaction is ITP + H2O = IMP + diphosphate + H(+). Pyrophosphatase that catalyzes the hydrolysis of nucleoside triphosphates to their monophosphate derivatives, with a high preference for the non-canonical purine nucleotides XTP (xanthosine triphosphate), dITP (deoxyinosine triphosphate) and ITP. Seems to function as a house-cleaning enzyme that removes non-canonical purine nucleotides from the nucleotide pool, thus preventing their incorporation into DNA/RNA and avoiding chromosomal lesions. The polypeptide is dITP/XTP pyrophosphatase (Porphyromonas gingivalis (strain ATCC BAA-308 / W83)).